A 221-amino-acid chain; its full sequence is Ktr system potassium uptake protein C (221 aa).

In terms of domain architecture, RCK N-terminal spans 2–118; that stretch reads KKEFAVIGLG…LSKIGADHIV (117 aa). NAD(+)-binding positions include R12, 32–34, 52–53, 74–76, 99–101, H105, and E121; these read DID, DS, IGE, and KAQ. Positions 135-219 constitute an RCK C-terminal domain; it reads NNVLDYLELS…ISRFEKRVLH (85 aa).

Belongs to the KtrA potassium transport family. Homodimer, tetramer (dimer of homodimer) and octamer (tetramer of homodimer). Part of the KtrCD complex formed by an octameric catalytic ring of KtrC and a membrane associated dimer of KtrD forming a potassium channel.

It localises to the cell membrane. In terms of biological role, catalytic subunit of the KtrCD potassium uptake transporter. The 2 major potassium transporter complexes KtrAB and KtrCD confer resistance to both suddenly imposed and prolonged osmotic stress. This is Ktr system potassium uptake protein C (ktrC) from Bacillus subtilis (strain 168).